A 217-amino-acid polypeptide reads, in one-letter code: Protein-L-isoaspartate O-methyltransferase (217 aa).

Ser-61 is a catalytic residue.

This sequence belongs to the methyltransferase superfamily. L-isoaspartyl/D-aspartyl protein methyltransferase family.

The protein resides in the cytoplasm. It carries out the reaction [protein]-L-isoaspartate + S-adenosyl-L-methionine = [protein]-L-isoaspartate alpha-methyl ester + S-adenosyl-L-homocysteine. Functionally, catalyzes the methyl esterification of L-isoaspartyl residues in peptides and proteins that result from spontaneous decomposition of normal L-aspartyl and L-asparaginyl residues. It plays a role in the repair and/or degradation of damaged proteins. This Brucella anthropi (strain ATCC 49188 / DSM 6882 / CCUG 24695 / JCM 21032 / LMG 3331 / NBRC 15819 / NCTC 12168 / Alc 37) (Ochrobactrum anthropi) protein is Protein-L-isoaspartate O-methyltransferase.